We begin with the raw amino-acid sequence, 155 residues long: Sec-independent protein translocase protein TatB (155 aa).

A helical membrane pass occupies residues 1–21 (MFGMGFFEILVVLVVAIIFLG). The tract at residues 109–155 (SLENNAPPKHLNKEVSNREVFHNEPPKEIELIANNNTTKHDKEKEHV) is disordered. Basic and acidic residues-rich tracts occupy residues 119-138 (LNKE…KEIE) and 146-155 (TKHDKEKEHV).

It belongs to the TatB family. In terms of assembly, the Tat system comprises two distinct complexes: a TatABC complex, containing multiple copies of TatA, TatB and TatC subunits, and a separate TatA complex, containing only TatA subunits. Substrates initially bind to the TatABC complex, which probably triggers association of the separate TatA complex to form the active translocon.

The protein localises to the cell inner membrane. In terms of biological role, part of the twin-arginine translocation (Tat) system that transports large folded proteins containing a characteristic twin-arginine motif in their signal peptide across membranes. Together with TatC, TatB is part of a receptor directly interacting with Tat signal peptides. TatB may form an oligomeric binding site that transiently accommodates folded Tat precursor proteins before their translocation. The polypeptide is Sec-independent protein translocase protein TatB (Helicobacter acinonychis (strain Sheeba)).